The following is a 268-amino-acid chain: Phosphatidylglycerol--prolipoprotein diacylglyceryl transferase (268 aa).

4 helical membrane passes run 14-34 (LGPIKIHWYGLMYLLGIFAGW), 57-77 (LTFYVALGVILGGRIGYIIFY), 90-110 (FFLWDGGMSFHGGFIGVLIAF), and 117-137 (IGANFFDLGEFIAPVIPIGLG). A 1,2-diacyl-sn-glycero-3-phospho-(1'-sn-glycerol) is bound at residue Arg-140. 3 helical membrane-spanning segments follow: residues 174–194 (QLFEFFFEGVVLFSVLWLVTI), 200–220 (YLVLGLFMFLYGCARFICEFF), and 238–258 (GQILSIPMILLGAVILIAVFI).

The protein belongs to the Lgt family.

The protein localises to the cell inner membrane. It carries out the reaction L-cysteinyl-[prolipoprotein] + a 1,2-diacyl-sn-glycero-3-phospho-(1'-sn-glycerol) = an S-1,2-diacyl-sn-glyceryl-L-cysteinyl-[prolipoprotein] + sn-glycerol 1-phosphate + H(+). It functions in the pathway protein modification; lipoprotein biosynthesis (diacylglyceryl transfer). In terms of biological role, catalyzes the transfer of the diacylglyceryl group from phosphatidylglycerol to the sulfhydryl group of the N-terminal cysteine of a prolipoprotein, the first step in the formation of mature lipoproteins. The protein is Phosphatidylglycerol--prolipoprotein diacylglyceryl transferase of Francisella tularensis subsp. mediasiatica (strain FSC147).